An 88-amino-acid polypeptide reads, in one-letter code: Eclosion hormone (88 aa).

Residues 1-26 (MAGKVTVAFFMFAMIAFLANFGYVEC) form the signal peptide. Cystine bridges form between Cys40/Cys64, Cys44/Cys60, and Cys47/Cys75.

Belongs to the insect eclosion hormone family.

The protein resides in the secreted. Its function is as follows. Neuropeptide that triggers the performance of ecdysis behaviors at the end of a molt. It triggers adult behavior patterns: larval, pupal and adult ecdysis, and plasticization during the molt. In Manduca sexta (Tobacco hawkmoth), this protein is Eclosion hormone.